An 896-amino-acid polypeptide reads, in one-letter code: MQTHEIRKRFLDHFVKAGHTEVPSASVILDDPNLLFVNAGMVQFVPYFLGQRTPPWNRATSIQKCIRTPDIDEVGITTRHNTFFQMAGNFSFGDYFKRGAIELAWTLLTNPVEEGGYGFDPERLWATVYLDDDEAIGLWQEVAGLPAERIQRRGMADNYWSMGIPGPCGPSSEIYYDRGPEYGVEGGPEANEDRYIEIWNLVFMQNERGEGTSKEDFEILGPLPRKNIDTGMGIERVACLLQGVDNVYETDLLRPVIDKVAAVAPRGYGAGNHDDDVRYRIIADHTRTAAIIIADGVSPGNEGRGYVLRRLLRRIIRAAKLLGVEQPVMGDLIATVRDAMGPSYPELVTDFERINRIAVAEETAFNRTLASGSKLFEDAARATKKSGATVLSGSDAFTLHDTYGFPIDLTLEMAAEAGLSVDQEGFRTLMAEQRQRAKADAAARKQAHTDLSAYRELVDAGPTEFTGFDELTSEATILGIFVDGKRVPVVSHDGLEADRVELILDRTPFYAEAGGQIADEGTISGTGASGTARAAVTDVQKIARTLWAHRVNVESGEFVEGDTVTAAVDPKWRRGATQGHSGTHMVHAALREVLGPNAVQAGSLNRPGYLRFDFNWQGPLSDDQRTQIEEVTNQAVEADYEVHTFVTELEKAKAMGAMAMFGERYPDQVRVVEIGGPFSLELCGGTHVHNSAQIGPVTILGESSVGSGVRRVEAYVGLDSFRHLAKERALMAGLASSLKVPSEEVPARVANLVERLKAAEKELDRMRLANARAAAVNAVAGAETVGKVRLVAQRMSGGMSANDLRSLVGDIRGKLGSEPAVVALIAEGENDAVPFVVAVNPAAQDLGLRANDLVKQFAAPVNGRGGGKADLAQGSGKGAAGIDAALAALRAEIGRS.

Residues histidine 580, histidine 584, cysteine 683, and histidine 687 each contribute to the Zn(2+) site.

This sequence belongs to the class-II aminoacyl-tRNA synthetase family. The cofactor is Zn(2+).

Its subcellular location is the cytoplasm. It catalyses the reaction tRNA(Ala) + L-alanine + ATP = L-alanyl-tRNA(Ala) + AMP + diphosphate. Its function is as follows. Catalyzes the attachment of alanine to tRNA(Ala) in a two-step reaction: alanine is first activated by ATP to form Ala-AMP and then transferred to the acceptor end of tRNA(Ala). Also edits incorrectly charged Ser-tRNA(Ala) and Gly-tRNA(Ala) via its editing domain. This chain is Alanine--tRNA ligase, found in Mycolicibacterium smegmatis (strain ATCC 700084 / mc(2)155) (Mycobacterium smegmatis).